Consider the following 421-residue polypeptide: Synaptotagmin-12 (421 aa).

The Vesicular portion of the chain corresponds to 1–18 (MAVDVTEYHLSVIKSPPG). Residues 19–39 (WEVGVYAAGALALLGIAAVSL) traverse the membrane as a helical segment. Over 40–421 (WKLWTSGSFP…VSMWHPVRRN (382 aa)) the chain is Cytoplasmic. At Ser97 the chain carries Phosphoserine; by PKA. Ser99 and Ser214 each carry phosphoserine. C2 domains follow at residues 152–272 (TLGQ…SGWL) and 283–416 (AVGE…SMWH).

The protein belongs to the synaptotagmin family. Homodimer. Can also form heterodimers. Interacts with SYT1. Phosphorylation of Ser-97 is required for mossy-fiber long-term potentiation. Expressed in the brain, specifically in neurons of the cerebellum, cortex, hippocampus, olfactory bulb, brainstem and spinal cord (at protein level).

It localises to the cytoplasmic vesicle. The protein localises to the secretory vesicle. It is found in the synaptic vesicle membrane. Functionally, synaptic vesicle phosphoprotein that enhances spontaneous neurotransmitter release but does not effect induced neurotransmitter release. Unlike other synaptotagmins, it does not bind Ca(2+) or phospholipids. Essential for mossy-fiber long-term potentiation in the hippocampus. The sequence is that of Synaptotagmin-12 from Rattus norvegicus (Rat).